The sequence spans 304 residues: Glyceraldehyde-3-phosphate dehydrogenase 2 (304 aa).

NAD(+)-binding positions include 1-2 (RI), aspartate 22, and arginine 67. D-glyceraldehyde 3-phosphate-binding positions include 138-140 (SCT), threonine 169, 198-199 (TG), and arginine 221. The Nucleophile role is filled by cysteine 139. An NAD(+)-binding site is contributed by asparagine 303.

Belongs to the glyceraldehyde-3-phosphate dehydrogenase family. In terms of assembly, homotetramer.

It is found in the cytoplasm. The enzyme catalyses D-glyceraldehyde 3-phosphate + phosphate + NAD(+) = (2R)-3-phospho-glyceroyl phosphate + NADH + H(+). Its pathway is carbohydrate degradation; glycolysis; pyruvate from D-glyceraldehyde 3-phosphate: step 1/5. This is Glyceraldehyde-3-phosphate dehydrogenase 2 (Gapdh2) from Drosophila subobscura (Fruit fly).